The primary structure comprises 254 residues: Phosphate import ATP-binding protein PstB 2 (254 aa).

Residues 9–249 (FNIDNLNLFY…PRDDRTRGYV (241 aa)) form the ABC transporter domain. 41–48 (GPSGCGKS) is an ATP binding site.

It belongs to the ABC transporter superfamily. Phosphate importer (TC 3.A.1.7) family. In terms of assembly, the complex is composed of two ATP-binding proteins (PstB), two transmembrane proteins (PstC and PstA) and a solute-binding protein (PstS).

The protein localises to the cell inner membrane. The enzyme catalyses phosphate(out) + ATP + H2O = ADP + 2 phosphate(in) + H(+). Functionally, part of the ABC transporter complex PstSACB involved in phosphate import. Responsible for energy coupling to the transport system. In Photobacterium profundum (strain SS9), this protein is Phosphate import ATP-binding protein PstB 2.